The following is a 309-amino-acid chain: Dermonecrotic toxin LarSicTox-alphaIB2bi (309 aa).

Val1 is a signal peptide. The propeptide occupies Arg2 to Arg27. His38 is a catalytic residue. Mg(2+)-binding residues include Glu58 and Asp60. Residue His74 is the Nucleophile of the active site. 2 disulfides stabilise this stretch: Cys78-Cys84 and Cys80-Cys223. Asp118 lines the Mg(2+) pocket. Asn286 carries N-linked (GlcNAc...) asparagine glycosylation.

It belongs to the arthropod phospholipase D family. Class II subfamily. Mg(2+) serves as cofactor. Expressed by the venom gland.

It is found in the secreted. It carries out the reaction an N-(acyl)-sphingosylphosphocholine = an N-(acyl)-sphingosyl-1,3-cyclic phosphate + choline. The catalysed reaction is N-hexanoyl-sphing-4-enine-1-phosphocholine = N-(hexanoyl)-sphing-4-enine-1,3-cyclic phosphate + choline. The enzyme catalyses N-(dodecanoyl)-sphing-4-enine-1-phosphocholine = N-dodecanoyl-sphing-4-enine-1,3-cyclic phosphate + choline. It catalyses the reaction a 1-acyl-sn-glycero-3-phosphocholine = a 1-acyl-sn-glycero-2,3-cyclic phosphate + choline. It carries out the reaction 1-tetradecanoyl-sn-glycero-3-phosphocholine = 1-tetradecanoyl-sn-glycero-2,3-cyclic phosphate + choline. The catalysed reaction is 1-octanoyl-sn-glycero-3-phosphocholine = 1-octanoyl-sn-glycero-2,3-cyclic phosphate + choline. The enzyme catalyses 1-hexadecanoyl-sn-glycero-3-phosphocholine = 1-hexadecanoyl-sn-glycero-2,3-cyclic phosphate + choline. It catalyses the reaction an N-(acyl)-sphingosylphosphoethanolamine = an N-(acyl)-sphingosyl-1,3-cyclic phosphate + ethanolamine. It carries out the reaction N-dodecanoyl-heptadecasphing-4-enine-1-phosphoethanolamine = N-dodecanoyl-heptadecasphing-4-enine-1,3-cyclic phosphate + ethanolamine. Its function is as follows. Dermonecrotic toxins cleave the phosphodiester linkage between the phosphate and headgroup of certain phospholipids (sphingolipid and lysolipid substrates), forming an alcohol (often choline) and a cyclic phosphate. This toxin acts on sphingomyelin (SM) with high activity and on lysophosphatidylcholine (LPC) and ceramide phosphoethanolamine (CPE) with low activity. In vivo, shows potent insecticidal activities. On mammals, induces dermonecrosis, hemolysis, increased vascular permeability, edema, inflammatory response, and platelet aggregation. The sequence is that of Dermonecrotic toxin LarSicTox-alphaIB2bi from Loxosceles arizonica (Arizona brown spider).